The sequence spans 905 residues: V-type proton ATPase 116 kDa subunit a 1 (905 aa).

At 1-424 the chain is on the cytoplasmic side; sequence MGDYVTPGEE…DAYGIATYRE (424 aa). Residues 425–443 traverse the membrane as a helical segment; the sequence is INPAPYTMISFPFLFAVMF. Over 444–445 the chain is Lumenal; it reads GD. Residues 446–462 traverse the membrane as a helical segment; the sequence is MGHGAIMLLAALFFILK. Topologically, residues 463 to 477 are cytoplasmic; it reads EKQLEAARIKDEIFQ. The helical transmembrane segment at 478-507 threads the bilayer; it reads TFFGGRYVIFLMGAFSIYTGFMYNDVFSKS. Over 508–572 the chain is Lumenal; that stretch reads INTFGSSWQN…EGNKLSFLNS (65 aa). Residues 573–592 traverse the membrane as a helical segment; the sequence is MKMKMSVLFGIAQMTFGVLL. The Cytoplasmic portion of the chain corresponds to 593–610; it reads SYQNFIYFKSDLDIKYMF. The chain crosses the membrane as a helical span at residues 611–631; that stretch reads IPQMIFLSSIFIYLCIQILSK. Residues 632–699 are Lumenal-facing; it reads WLFFGAVGGT…YPGQATIEII (68 aa). A helical transmembrane segment spans residues 700-719; sequence LVVLALVQVPIMLFAKPYFL. The Cytoplasmic segment spans residues 720–788; it reads YRRDKQQSRY…DVMVYQAIHT (69 aa). Residues 789–813 form a helical membrane-spanning segment; it reads IEFVLGCVSHTASYLRLWALSLAHA. Residues 814 to 834 lie on the Lumenal side of the membrane; that stretch reads QLSDVLWTMVFRNAFVLDGYT. Residues 835 to 873 form a helical membrane-spanning segment; the sequence is GAIATYILFFIFGSLSVFILVLMEGLSAFLHALRLHWVE. Topologically, residues 874 to 905 are cytoplasmic; sequence FQSKFYGGLGYEFAPFSFEKILAEEREAEENL.

The protein belongs to the V-ATPase 116 kDa subunit family. In terms of assembly, V-ATPase is a heteromultimeric enzyme made up of two complexes: the ATP-hydrolytic V1 complex and the proton translocation V0 complex. The V1 complex consists of three catalytic AB heterodimers that form a heterohexamer, three peripheral stalks each consisting of EG heterodimers, one central rotor including subunits D and F, and the regulatory subunits C and H. The proton translocation complex V0 consists of the proton transport subunit a, a ring of proteolipid subunits c9c'', rotary subunit d, subunits e and f, and the accessory subunits vah-19/Ac45 and vah-20/PRR. Interacts with V-type proton ATPase subunit C vha-11. As to expression, ubiquitous expression in embryos. Expressed in gonads, intestine, neurons in the head and motoneurons in the ventral cord of larvae and adults. Expressed in the vulvae and spermathecal uterine valves. Weakly expressed in the pharynx. Specifically expressed in the nervous system.

It is found in the membrane. Its function is as follows. Subunit of the V0 complex of vacuolar(H+)-ATPase (V-ATPase), a multisubunit enzyme composed of a peripheral complex (V1) that hydrolyzes ATP and a membrane integral complex (V0) that translocates protons. V-ATPase is responsible for acidifying and maintaining the pH of intracellular compartments and in some cell types, is targeted to the plasma membrane, where it is responsible for acidifying the extracellular environment. Required for assembly and activity of the vacuolar ATPase. Regulates the size of gut granules during embryonic development. In neurons, required for necrotic cell death by promoting intracellular acidification. Required for cell death induced by hypoxia. Required for acidification of synaptic vesicles and the release of neurotransmitters from adult neurons. This chain is V-type proton ATPase 116 kDa subunit a 1, found in Caenorhabditis elegans.